Consider the following 138-residue polypeptide: Small ribosomal subunit protein uS11c (138 aa).

A disordered region spans residues 1–23 (MAKTIPRIGSRKNGRIGSRKNTR). A compositionally biased stretch (basic residues) spans 9-23 (GSRKNGRIGSRKNTR).

Belongs to the universal ribosomal protein uS11 family. Part of the 30S ribosomal subunit.

The protein resides in the plastid. Its subcellular location is the chloroplast. This Daucus carota (Wild carrot) protein is Small ribosomal subunit protein uS11c.